Reading from the N-terminus, the 270-residue chain is Glucosamine-6-phosphate deaminase (270 aa).

Asp-68 functions as the Proton acceptor; for enolization step in the catalytic mechanism. Residue Asp-145 is the For ring-opening step of the active site. His-147 acts as the Proton acceptor; for ring-opening step in catalysis. Glu-152 functions as the For ring-opening step in the catalytic mechanism.

Belongs to the glucosamine/galactosamine-6-phosphate isomerase family. NagB subfamily.

It catalyses the reaction alpha-D-glucosamine 6-phosphate + H2O = beta-D-fructose 6-phosphate + NH4(+). The protein operates within amino-sugar metabolism; N-acetylneuraminate degradation; D-fructose 6-phosphate from N-acetylneuraminate: step 5/5. In terms of biological role, catalyzes the reversible isomerization-deamination of glucosamine 6-phosphate (GlcN6P) to form fructose 6-phosphate (Fru6P) and ammonium ion. The protein is Glucosamine-6-phosphate deaminase of Bifidobacterium longum (strain NCC 2705).